A 462-amino-acid polypeptide reads, in one-letter code: MTMRSPLTNDHPQPLRASPLSEHDDEIQIRLDDSRYRSFPPPRRVVQRNTPAPIQLQDFEFPKQSHDIPGHYPMIDEIYPDVHPYRTSEDGFVSLTNGDNMAQNKRASRSRPWMQNLQTQDRIQRYKKRRPATKWMKWMNSDWKNHIVAVIGELIGTSLFLFFGYAGIEVAKLQGREPPDLEVLFYISATFGASLMVTAWIFFRISGGLFNPAVTLALAILKAVSPIRAFLLVITQLGASCLAAILVQEIFPKQLDVATTLGSGTSMGQGFVIEAITTAALIFTIIMLAVEKHKATFVAPIGIGLALFVAHMVAVPFTGASLNPARSFGPSAIVWNFPREHWIYWVGPILGAGLAVLFFRLIKLMEYEMANPGQDGDPENDPTQNPELDVAQNAHEREEEVLGLSNGKSWYRDDSSSGSMRRKESVNSFTGGRRSMDRRGDIFRRLDDVEAQWRRQQYRNVV.

The span at 1–11 shows a compositional bias: polar residues; that stretch reads MTMRSPLTNDH. The interval 1–24 is disordered; it reads MTMRSPLTNDHPQPLRASPLSEHD. At 1–146 the chain is on the cytoplasmic side; sequence MTMRSPLTND…KWMNSDWKNH (146 aa). The helical transmembrane segment at 147-167 threads the bilayer; sequence IVAVIGELIGTSLFLFFGYAG. Residues 168–182 are Extracellular-facing; it reads IEVAKLQGREPPDLE. Residues 183-203 traverse the membrane as a helical segment; that stretch reads VLFYISATFGASLMVTAWIFF. Residues 204–229 lie on the Cytoplasmic side of the membrane; that stretch reads RISGGLFNPAVTLALAILKAVSPIRA. The NPA 1 signature appears at 211–213; it reads NPA. The chain crosses the membrane as a helical span at residues 230–250; that stretch reads FLLVITQLGASCLAAILVQEI. The Extracellular segment spans residues 251 to 269; sequence FPKQLDVATTLGSGTSMGQ. The chain crosses the membrane as a helical span at residues 270–290; sequence GFVIEAITTAALIFTIIMLAV. At 291–296 the chain is on the cytoplasmic side; it reads EKHKAT. Residues 297 to 317 traverse the membrane as a helical segment; it reads FVAPIGIGLALFVAHMVAVPF. Residues 318 to 341 are Extracellular-facing; it reads TGASLNPARSFGPSAIVWNFPREH. Residues 323–325 carry the NPA 2 motif; sequence NPA. A helical membrane pass occupies residues 342-362; sequence WIYWVGPILGAGLAVLFFRLI. Residues 363–462 are Cytoplasmic-facing; that stretch reads KLMEYEMANP…WRRQQYRNVV (100 aa). A disordered region spans residues 407 to 433; the sequence is GKSWYRDDSSSGSMRRKESVNSFTGGR. The span at 410-425 shows a compositional bias: basic and acidic residues; the sequence is WYRDDSSSGSMRRKES.

This sequence belongs to the MIP/aquaporin (TC 1.A.8) family.

It is found in the membrane. The catalysed reaction is H2O(in) = H2O(out). Functionally, water channel required to facilitate the transport of water across membranes. Involved in conidiation. The chain is Aquaporin-1 from Botryotinia fuckeliana (strain B05.10) (Noble rot fungus).